The chain runs to 1260 residues: uncharacterized protein (1260 aa).

The protein localises to the plastid. It localises to the chloroplast. This is an uncharacterized protein from Ostreococcus tauri.